A 441-amino-acid chain; its full sequence is Chromosomal replication initiator protein DnaA (441 aa).

The segment at 1 to 80 (MQNDVLARWE…MHQEISLQFI (80 aa)) is domain I, interacts with DnaA modulators. The interval 80 to 102 (ILAGQEVDQPKPKERSSEETYIN) is domain II. The tract at residues 103–320 (ILNPRYTFDT…GALIRVSAFS (218 aa)) is domain III, AAA+ region. Residues glycine 147, glycine 149, lysine 150, and threonine 151 each coordinate ATP. A domain IV, binds dsDNA region spans residues 321-441 (SLEQRDATPQ…IKELKKRIGE (121 aa)).

It belongs to the DnaA family. Oligomerizes as a right-handed, spiral filament on DNA at oriC.

The protein resides in the cytoplasm. Its function is as follows. Plays an essential role in the initiation and regulation of chromosomal replication. ATP-DnaA binds to the origin of replication (oriC) to initiate formation of the DNA replication initiation complex once per cell cycle. Binds the DnaA box (a 9 base pair repeat at the origin) and separates the double-stranded (ds)DNA. Forms a right-handed helical filament on oriC DNA; dsDNA binds to the exterior of the filament while single-stranded (ss)DNA is stabiized in the filament's interior. The ATP-DnaA-oriC complex binds and stabilizes one strand of the AT-rich DNA unwinding element (DUE), permitting loading of DNA polymerase. After initiation quickly degrades to an ADP-DnaA complex that is not apt for DNA replication. Binds acidic phospholipids. The polypeptide is Chromosomal replication initiator protein DnaA (Desulforamulus reducens (strain ATCC BAA-1160 / DSM 100696 / MI-1) (Desulfotomaculum reducens)).